A 615-amino-acid polypeptide reads, in one-letter code: Granule-bound starch synthase 1, chloroplastic/amyloplastic (615 aa).

Residues 1–70 (MAALVTSQLA…DRRCLSMVVR (70 aa)) constitute a chloroplast transit peptide. K91 contacts ADP-alpha-D-glucose.

It belongs to the glycosyltransferase 1 family. Bacterial/plant glycogen synthase subfamily. In terms of tissue distribution, found in seeds and pollen.

The protein localises to the plastid. It localises to the chloroplast. The protein resides in the amyloplast. It carries out the reaction an NDP-alpha-D-glucose + [(1-&gt;4)-alpha-D-glucosyl](n) = [(1-&gt;4)-alpha-D-glucosyl](n+1) + a ribonucleoside 5'-diphosphate + H(+). It participates in glycan biosynthesis; starch biosynthesis. In Triticum aestivum (Wheat), this protein is Granule-bound starch synthase 1, chloroplastic/amyloplastic (WAXY).